A 51-amino-acid chain; its full sequence is Large ribosomal subunit protein eL39 (51 aa).

Residues 1 to 23 (MPSQKSFRTKQKLAKAQKQNRPL) form a disordered region.

Belongs to the eukaryotic ribosomal protein eL39 family. As to quaternary structure, component of the large ribosomal subunit. Mature ribosomes consist of a small (40S) and a large (60S) subunit. The 40S subunit contains about 32 different proteins and 1 molecule of RNA (18S). The 60S subunit contains 45 different proteins and 3 molecules of RNA (25S, 5.8S and 5S).

It is found in the cytoplasm. In terms of biological role, component of the ribosome, a large ribonucleoprotein complex responsible for the synthesis of proteins in the cell. The small ribosomal subunit (SSU) binds messenger RNAs (mRNAs) and translates the encoded message by selecting cognate aminoacyl-transfer RNA (tRNA) molecules. The large subunit (LSU) contains the ribosomal catalytic site termed the peptidyl transferase center (PTC), which catalyzes the formation of peptide bonds, thereby polymerizing the amino acids delivered by tRNAs into a polypeptide chain. The nascent polypeptides leave the ribosome through a tunnel in the LSU and interact with protein factors that function in enzymatic processing, targeting, and the membrane insertion of nascent chains at the exit of the ribosomal tunnel. The protein is Large ribosomal subunit protein eL39 of Candida albicans (strain SC5314 / ATCC MYA-2876) (Yeast).